We begin with the raw amino-acid sequence, 147 residues long: Peptide methionine sulfoxide reductase MsrA (147 aa).

Residue cysteine 10 is part of the active site.

Belongs to the MsrA Met sulfoxide reductase family.

It carries out the reaction L-methionyl-[protein] + [thioredoxin]-disulfide + H2O = L-methionyl-(S)-S-oxide-[protein] + [thioredoxin]-dithiol. It catalyses the reaction [thioredoxin]-disulfide + L-methionine + H2O = L-methionine (S)-S-oxide + [thioredoxin]-dithiol. Has an important function as a repair enzyme for proteins that have been inactivated by oxidation. Catalyzes the reversible oxidation-reduction of methionine sulfoxide in proteins to methionine. In Pelagibacter ubique (strain HTCC1062), this protein is Peptide methionine sulfoxide reductase MsrA.